A 275-amino-acid chain; its full sequence is DNA polymerase II subunit B4 (275 aa).

The DNA-binding element occupies 11–17 (LPLAIVR). Over residues 112-122 (ASYPAGGAALK) the composition is skewed to low complexity. The disordered stretch occupies residues 112 to 275 (ASYPAGGAAL…EEVESDEEDE (164 aa)). A Nuclear localization signal motif is present at residues 135–142 (KKRKQEEP). Residues 151 to 161 (SKIDEETKRND) are compositionally biased toward basic and acidic residues. Positions 152–179 (KIDEETKRNDEETENDNTEEENGNDEED) form a coiled coil. 2 stretches are compositionally biased toward acidic residues: residues 162–237 (EETE…EESG) and 266–275 (EEVESDEEDE).

It belongs to the NFYB/HAP3 subunit family. As to quaternary structure, heterotrimeric transcription factor composed of three components, NF-YA, NF-YB and NF-YC. NF-YB and NF-YC must interact and dimerize for NF-YA association and DNA binding. Binds directly with DPB3-1.

Its subcellular location is the nucleus. Component of the NF-Y/HAP transcription factor complex. The NF-Y complex stimulates the transcription of various genes by recognizing and binding to a CCAAT motif in promoters. The sequence is that of DNA polymerase II subunit B4 from Arabidopsis thaliana (Mouse-ear cress).